A 49-amino-acid polypeptide reads, in one-letter code: SPbeta prophage-derived uncharacterized protein YorN (49 aa).

This chain is SPbeta prophage-derived uncharacterized protein YorN (yorN), found in Bacillus subtilis (strain 168).